Here is a 555-residue protein sequence, read N- to C-terminus: Membrane protein insertase YidC (555 aa).

5 consecutive transmembrane segments (helical) span residues 7–24 (VLWVIFFMSAVMLYDNWQ), 367–387 (WGWSIVLLTLLIKAVFFPLSA), 437–457 (LPVVIQIPVFISLYWVLLASV), 476–496 (PFFILPVLMAVSMYVQTSLNP), and 511–531 (PIAFSVMFFFFPAGLVLYYVV).

This sequence belongs to the OXA1/ALB3/YidC family. Type 1 subfamily. As to quaternary structure, interacts with the Sec translocase complex via SecD. Specifically interacts with transmembrane segments of nascent integral membrane proteins during membrane integration.

Its subcellular location is the cell inner membrane. Required for the insertion and/or proper folding and/or complex formation of integral membrane proteins into the membrane. Involved in integration of membrane proteins that insert both dependently and independently of the Sec translocase complex, as well as at least some lipoproteins. Aids folding of multispanning membrane proteins. The polypeptide is Membrane protein insertase YidC (Burkholderia lata (strain ATCC 17760 / DSM 23089 / LMG 22485 / NCIMB 9086 / R18194 / 383)).